The primary structure comprises 219 residues: Imidazole glycerol phosphate synthase subunit HisH (219 aa).

Residues 2 to 218 (KVVVIDSGTG…MVWTPEGTSG (217 aa)) form the Glutamine amidotransferase type-1 domain. The active-site Nucleophile is Cys-87. Active-site residues include His-193 and Glu-195.

Heterodimer of HisH and HisF.

It is found in the cytoplasm. It catalyses the reaction 5-[(5-phospho-1-deoxy-D-ribulos-1-ylimino)methylamino]-1-(5-phospho-beta-D-ribosyl)imidazole-4-carboxamide + L-glutamine = D-erythro-1-(imidazol-4-yl)glycerol 3-phosphate + 5-amino-1-(5-phospho-beta-D-ribosyl)imidazole-4-carboxamide + L-glutamate + H(+). The catalysed reaction is L-glutamine + H2O = L-glutamate + NH4(+). Its pathway is amino-acid biosynthesis; L-histidine biosynthesis; L-histidine from 5-phospho-alpha-D-ribose 1-diphosphate: step 5/9. Its function is as follows. IGPS catalyzes the conversion of PRFAR and glutamine to IGP, AICAR and glutamate. The HisH subunit catalyzes the hydrolysis of glutamine to glutamate and ammonia as part of the synthesis of IGP and AICAR. The resulting ammonia molecule is channeled to the active site of HisF. This chain is Imidazole glycerol phosphate synthase subunit HisH, found in Granulibacter bethesdensis (strain ATCC BAA-1260 / CGDNIH1).